The primary structure comprises 126 residues: uncharacterized protein (126 aa).

This is an uncharacterized protein from Acanthamoeba polyphaga mimivirus (APMV).